We begin with the raw amino-acid sequence, 85 residues long: Large ribosomal subunit protein bL27 (85 aa).

Positions 1–10 (MAQKKGGGST) are enriched in gly residues. Residues 1 to 20 (MAQKKGGGSTRNGRDSKPKM) form a disordered region.

This sequence belongs to the bacterial ribosomal protein bL27 family.

This chain is Large ribosomal subunit protein bL27, found in Delftia acidovorans (strain DSM 14801 / SPH-1).